Consider the following 234-residue polypeptide: UPF0502 protein BPSS1373 (234 aa).

It belongs to the UPF0502 family.

This is UPF0502 protein BPSS1373 from Burkholderia pseudomallei (strain K96243).